The sequence spans 401 residues: Insertion element ISM1 uncharacterized 48.3 kDa protein (401 aa).

Its function is as follows. This polypeptide is involved in transposition, and should therefore bind to nucleic acids. The protein is Insertion element ISM1 uncharacterized 48.3 kDa protein of Methanobrevibacter smithii.